We begin with the raw amino-acid sequence, 504 residues long: Histidine ammonia-lyase (504 aa).

The segment at residues 142 to 144 is a cross-link (5-imidazolinone (Ala-Gly)); the sequence is ASG. Ser143 carries the post-translational modification 2,3-didehydroalanine (Ser).

It belongs to the PAL/histidase family. Contains an active site 4-methylidene-imidazol-5-one (MIO), which is formed autocatalytically by cyclization and dehydration of residues Ala-Ser-Gly.

The protein resides in the cytoplasm. It catalyses the reaction L-histidine = trans-urocanate + NH4(+). Its pathway is amino-acid degradation; L-histidine degradation into L-glutamate; N-formimidoyl-L-glutamate from L-histidine: step 1/3. This chain is Histidine ammonia-lyase, found in Staphylococcus aureus (strain MSSA476).